The sequence spans 503 residues: ATP synthase subunit alpha (503 aa).

170-177 contacts ATP; sequence GDKQTGKT.

It belongs to the ATPase alpha/beta chains family. F-type ATPases have 2 components, CF(1) - the catalytic core - and CF(0) - the membrane proton channel. CF(1) has five subunits: alpha(3), beta(3), gamma(1), delta(1), epsilon(1). CF(0) has three main subunits: a(1), b(2) and c(9-12). The alpha and beta chains form an alternating ring which encloses part of the gamma chain. CF(1) is attached to CF(0) by a central stalk formed by the gamma and epsilon chains, while a peripheral stalk is formed by the delta and b chains.

Its subcellular location is the cell inner membrane. It catalyses the reaction ATP + H2O + 4 H(+)(in) = ADP + phosphate + 5 H(+)(out). Functionally, produces ATP from ADP in the presence of a proton gradient across the membrane. The alpha chain is a regulatory subunit. This chain is ATP synthase subunit alpha, found in Helicobacter pylori (strain P12).